Consider the following 210-residue polypeptide: ATP phosphoribosyltransferase (210 aa).

The protein belongs to the ATP phosphoribosyltransferase family. Short subfamily. As to quaternary structure, heteromultimer composed of HisG and HisZ subunits.

The protein resides in the cytoplasm. It catalyses the reaction 1-(5-phospho-beta-D-ribosyl)-ATP + diphosphate = 5-phospho-alpha-D-ribose 1-diphosphate + ATP. It functions in the pathway amino-acid biosynthesis; L-histidine biosynthesis; L-histidine from 5-phospho-alpha-D-ribose 1-diphosphate: step 1/9. In terms of biological role, catalyzes the condensation of ATP and 5-phosphoribose 1-diphosphate to form N'-(5'-phosphoribosyl)-ATP (PR-ATP). Has a crucial role in the pathway because the rate of histidine biosynthesis seems to be controlled primarily by regulation of HisG enzymatic activity. The sequence is that of ATP phosphoribosyltransferase from Bacillus cytotoxicus (strain DSM 22905 / CIP 110041 / 391-98 / NVH 391-98).